The following is a 195-amino-acid chain: GTP-dependent dephospho-CoA kinase (195 aa).

Positions 49, 50, 68, 127, and 150 each coordinate GTP.

This sequence belongs to the GTP-dependent DPCK family.

It catalyses the reaction 3'-dephospho-CoA + GTP = GDP + CoA + H(+). Its pathway is cofactor biosynthesis; coenzyme A biosynthesis. Catalyzes the GTP-dependent phosphorylation of the 3'-hydroxyl group of dephosphocoenzyme A to form coenzyme A (CoA). In Methanosarcina barkeri (strain Fusaro / DSM 804), this protein is GTP-dependent dephospho-CoA kinase.